The primary structure comprises 446 residues: Iron-sulfur cluster assembly SufBD family protein PH1385 (446 aa).

It belongs to the iron-sulfur cluster assembly SufBD family.

The polypeptide is Iron-sulfur cluster assembly SufBD family protein PH1385 (Pyrococcus horikoshii (strain ATCC 700860 / DSM 12428 / JCM 9974 / NBRC 100139 / OT-3)).